The chain runs to 176 residues: Peptidoglycan-associated lipoprotein (176 aa).

A signal peptide spans 1–21; that stretch reads MKAGSFYKLGLLVASAVLVAA. Cysteine 22 carries the N-palmitoyl cysteine lipid modification. A lipid anchor (S-diacylglycerol cysteine) is attached at cysteine 22. Residues 60-176 enclose the OmpA-like domain; sequence YTTQAPHNQL…RVEFIYEATR (117 aa).

The protein belongs to the Pal lipoprotein family. As to quaternary structure, the Tol-Pal system is composed of five core proteins: the inner membrane proteins TolA, TolQ and TolR, the periplasmic protein TolB and the outer membrane protein Pal. They form a network linking the inner and outer membranes and the peptidoglycan layer.

It localises to the cell outer membrane. Its function is as follows. Part of the Tol-Pal system, which plays a role in outer membrane invagination during cell division and is important for maintaining outer membrane integrity. Very strongly associated with the peptidoglycan. In Legionella pneumophila, this protein is Peptidoglycan-associated lipoprotein.